Reading from the N-terminus, the 398-residue chain is Immunoglobulin heavy constant gamma 2A (398 aa).

Ig-like domains lie at 5-97 (PSVY…KKIE), 120-219 (PSVF…RTIS), and 228-324 (PQVY…KSFS). 3 cysteine pairs are disulfide-bonded: C26–C81, C143–C203, and C249–C307. N-linked (GlcNAc...) asparagine glycosylation occurs at N179. A helical membrane pass occupies residues 345 to 362 (GLWTTITIFISLFLLSVC). Residues 363–398 (YSASVTLFKVKWIFSSVVELKQTISPDYRNMIGQGA) lie on the Cytoplasmic side of the membrane.

Its subcellular location is the cell membrane. The sequence is that of Immunoglobulin heavy constant gamma 2A from Mus musculus (Mouse).